The sequence spans 353 residues: Heterogeneous nuclear ribonucleoproteins A2/B1 (353 aa).

Position 1 is an N-acetylmethionine (M1). Residue T4 is modified to Phosphothreonine. The Nuclear localization signal motif lies at 9–15 (PLERKKR). RRM domains follow at residues 21-104 (RKLF…ESGK) and 112-191 (KKLF…LSRQ). K22 is covalently cross-linked (Glycyl lysine isopeptide (Lys-Gly) (interchain with G-Cter in SUMO2)). A Phosphoserine modification is found at S29. The residue at position 38 (R38) is an Omega-N-methylarginine. Residue S85 is modified to Phosphoserine. N6,N6-dimethyllysine; alternate is present on K104. A Glycyl lysine isopeptide (Lys-Gly) (interchain with G-Cter in SUMO2); alternate cross-link involves residue K104. Glycyl lysine isopeptide (Lys-Gly) (interchain with G-Cter in SUMO2) cross-links involve residues K112, K120, and K137. Residue T140 is modified to Phosphothreonine. S149 carries the phosphoserine modification. K152 participates in a covalent cross-link: Glycyl lysine isopeptide (Lys-Gly) (interchain with G-Cter in SUMO2). The residue at position 159 (T159) is a Phosphothreonine. Glycyl lysine isopeptide (Lys-Gly) (interchain with G-Cter in SUMO2); alternate cross-links involve residues K168 and K173. Residues K168 and K173 each carry the N6-acetyllysine; alternate modification. Position 176 is a phosphothreonine (T176). A Glycyl lysine isopeptide (Lys-Gly) (interchain with G-Cter in SUMO2) cross-link involves residue K186. A phosphoserine mark is found at S189 and S201. Residues 193–353 (MQEVQSSRSG…SGGYGGRSRY (161 aa)) form a disordered region. Positions 202 to 223 (GRGGNFGFGDSRGGGGNFGPGP) are enriched in gly residues. An Asymmetric dimethylarginine; alternate modification is found at R203. R203 carries the post-translational modification Dimethylated arginine; alternate. R203 is subject to Omega-N-methylarginine; alternate. S212 is subject to Phosphoserine. R213 is subject to Asymmetric dimethylarginine; alternate. R213 is subject to Dimethylated arginine; alternate. R213 is subject to Omega-N-methylarginine; alternate. Phosphoserine is present on S225. At R228 the chain carries Omega-N-methylarginine. Residues S231 and S236 each carry the phosphoserine modification. Omega-N-methylarginine is present on R238. S259 carries the phosphoserine modification. Asymmetric dimethylarginine; alternate is present on R266. R266 carries the omega-N-methylarginine; alternate modification. The tract at residues 308 to 347 (QQPSNYGPMKSGNFGGSRNMGGPYGGGNYGPGGSGGSGGY) is nuclear targeting sequence. Over residues 320 to 353 (NFGGSRNMGGPYGGGNYGPGGSGGSGGYGGRSRY) the composition is skewed to gly residues. Phosphoserine is present on S324. R325 is modified (omega-N-methylarginine). Y331 is modified (phosphotyrosine). Phosphoserine is present on residues S341 and S344. Y347 carries the phosphotyrosine modification. The residue at position 350 (R350) is an Omega-N-methylarginine.

As to quaternary structure, identified in the spliceosome C complex. Identified in a IGF2BP1-dependent mRNP granule complex containing untranslated mRNAs. Interacts with IGF2BP1. Interacts with C9orf72. Interacts with DGCR8. Interacts with TARDBP. Interacts with CKAP5. Interacts with PPIA/CYPA. Interacts (via C-terminus) with FAM76B; the interaction results in retention of HNRNPA2B1 in the nucleus and inhibition of the NF-kappa-B-mediated inflammatory pathway. Interacts with NF-kappa-B inhibitors NFKBIA and NFKBIE; the interaction may be mediated by the RRM2 domain of HNRNPA2B1, and HNRNPA2B1 may interact simultaneously with FAM76B and either NFKBIA or NFKBIE to form a complex. Sumoylated in exosomes, promoting miRNAs-binding. Post-translationally, asymmetric dimethylation at Arg-266 constitutes the major methylation site. According to a report, methylation affects subcellular location and promotes nuclear localization. According to another report, methylation at Arg-266 does not influence nucleocytoplasmic shuttling.

It is found in the nucleus. Its subcellular location is the nucleoplasm. The protein localises to the cytoplasmic granule. It localises to the secreted. The protein resides in the extracellular exosome. Functionally, heterogeneous nuclear ribonucleoprotein (hnRNP) that associates with nascent pre-mRNAs, packaging them into hnRNP particles. The hnRNP particle arrangement on nascent hnRNA is non-random and sequence-dependent and serves to condense and stabilize the transcripts and minimize tangling and knotting. Packaging plays a role in various processes such as transcription, pre-mRNA processing, RNA nuclear export, subcellular location, mRNA translation and stability of mature mRNAs. Forms hnRNP particles with at least 20 other different hnRNP and heterogeneous nuclear RNA in the nucleus. Involved in transport of specific mRNAs to the cytoplasm in oligodendrocytes and neurons: acts by specifically recognizing and binding the A2RE (21 nucleotide hnRNP A2 response element) or the A2RE11 (derivative 11 nucleotide oligonucleotide) sequence motifs present on some mRNAs, and promotes their transport to the cytoplasm. Specifically binds single-stranded telomeric DNA sequences, protecting telomeric DNA repeat against endonuclease digestion. Also binds other RNA molecules, such as primary miRNA (pri-miRNAs): acts as a nuclear 'reader' of the N6-methyladenosine (m6A) mark by specifically recognizing and binding a subset of nuclear m6A-containing pri-miRNAs. Binding to m6A-containing pri-miRNAs promotes pri-miRNA processing by enhancing binding of DGCR8 to pri-miRNA transcripts. Involved in miRNA sorting into exosomes following sumoylation, possibly by binding (m6A)-containing pre-miRNAs. Acts as a regulator of efficiency of mRNA splicing, possibly by binding to m6A-containing pre-mRNAs. Plays a role in the splicing of pyruvate kinase PKM by binding repressively to sequences flanking PKM exon 9, inhibiting exon 9 inclusion and resulting in exon 10 inclusion and production of the PKM M2 isoform. The protein is Heterogeneous nuclear ribonucleoproteins A2/B1 (HNRNPA2B1) of Pongo abelii (Sumatran orangutan).